A 235-amino-acid polypeptide reads, in one-letter code: Myb family transcription factor PHL12 (235 aa).

The segment covering 1-12 has biased composition (basic and acidic residues); the sequence is MMQSREEIRDDS. The tract at residues 1-20 is disordered; it reads MMQSREEIRDDSSSGLVLTT. The HTH myb-type domain maps to 20–80; that stretch reads TDPKPRLRWT…HLQKFRLGKQ (61 aa). The H-T-H motif DNA-binding region spans 51–76; sequence PKTIMRVMGVKGLTLYHLKSHLQKFR. The tract at residues 119–139 is coiled coil; it reads RNMNEMQMEVQRRIEEEVVIE.

The protein belongs to the MYB-CC family. In terms of tissue distribution, expressed in phloem and/or cambium.

The protein localises to the nucleus. This chain is Myb family transcription factor PHL12, found in Arabidopsis thaliana (Mouse-ear cress).